Consider the following 572-residue polypeptide: Probable terpene synthase 11 (572 aa).

Residues Asp-317, Asp-321, and Glu-469 each contribute to the Mg(2+) site. Positions 317–321 match the DDXXD motif motif; that stretch reads DDIFD.

It belongs to the terpene synthase family. It depends on Mg(2+) as a cofactor.

In terms of biological role, probable sesquiterpene synthase. The protein is Probable terpene synthase 11 (TPS11) of Ricinus communis (Castor bean).